The following is a 225-amino-acid chain: 7-cyano-7-deazaguanine synthase (225 aa).

9–19 contributes to the ATP binding site; sequence YSGGLDSTTCL. Zn(2+)-binding residues include Cys188, Cys198, Cys201, and Cys204.

The protein belongs to the QueC family. Requires Zn(2+) as cofactor.

It catalyses the reaction 7-carboxy-7-deazaguanine + NH4(+) + ATP = 7-cyano-7-deazaguanine + ADP + phosphate + H2O + H(+). It functions in the pathway purine metabolism; 7-cyano-7-deazaguanine biosynthesis. Catalyzes the ATP-dependent conversion of 7-carboxy-7-deazaguanine (CDG) to 7-cyano-7-deazaguanine (preQ(0)). The sequence is that of 7-cyano-7-deazaguanine synthase from Citrifermentans bemidjiense (strain ATCC BAA-1014 / DSM 16622 / JCM 12645 / Bem) (Geobacter bemidjiensis).